A 222-amino-acid polypeptide reads, in one-letter code: Pyridoxal phosphate homeostasis protein (222 aa).

Position 35 is an N6-(pyridoxal phosphate)lysine (lysine 35).

The protein belongs to the pyridoxal phosphate-binding protein YggS/PROSC family.

Pyridoxal 5'-phosphate (PLP)-binding protein, which is involved in PLP homeostasis. The protein is Pyridoxal phosphate homeostasis protein of Helicobacter pylori (strain J99 / ATCC 700824) (Campylobacter pylori J99).